An 83-amino-acid chain; its full sequence is Transmembrane protein EP84R (83 aa).

2 consecutive transmembrane segments (helical) span residues 31-51 (IIGVILLVISLLFIFIGIIIL) and 59-79 (TGSIFVVLSLILGGGGFFLIY).

Belongs to the asfivirus EP84R family.

The protein localises to the virion membrane. The chain is Transmembrane protein EP84R from Ornithodoros (relapsing fever ticks).